The chain runs to 722 residues: Bifunctional UDP-N-acetylglucosamine 2-epimerase/N-acetylmannosamine kinase (722 aa).

Residues Arg19, Ser23, Arg113, His220, and Asn253 each contribute to the UDP site. The CMP-N-acetyl-beta-neuraminate site is built by Lys259, Glu271, Lys280, and His281. 5 residues coordinate UDP: Val282, Ser301, Ser302, Glu307, and Arg321. Residues 406-722 (TLSALAVDLG…VLDYTTRRIH (317 aa)) form an N-acetylmannosamine kinase region. Asp413 provides a ligand contact to Mg(2+). Residue Gly416 coordinates an N-acyl-D-mannosamine 6-phosphate. Residues Thr417, Asn418, and Arg420 each contribute to the ADP site. The an N-acyl-D-mannosamine 6-phosphate site is built by Gly476, Arg477, Thr489, Asn516, Asp517, and Gly545. An N-acyl-D-mannosamine contacts are provided by Gly476, Arg477, Thr489, Asn516, and Asp517. Asp517 is a catalytic residue. Residues Glu566 and His569 each coordinate an N-acyl-D-mannosamine. Residue His569 participates in an N-acyl-D-mannosamine 6-phosphate binding. Zn(2+) is bound by residues His569, Cys579, Cys581, and Cys586. Position 588 (Glu588) interacts with an N-acyl-D-mannosamine 6-phosphate. Glu588 is an an N-acyl-D-mannosamine binding site.

It in the N-terminal section; belongs to the UDP-N-acetylglucosamine 2-epimerase family. The protein in the C-terminal section; belongs to the ROK (NagC/XylR) family. In terms of assembly, homodimer. Homotetramer. Homohexamer. The hexameric form exhibits both enzyme activities, whereas the dimeric form only catalyzes the phosphorylation of N-acyl-D-mannosamine. Post-translationally, phosphorylated. Phosphorylation by PKC activates the UDP-N-acetylglucosamine 2-epimerase activity. In terms of tissue distribution, widely expressed. Highest expression in liver. Also found at high levels in lung, brain and kidney.

The protein localises to the cytoplasm. It localises to the cytosol. It carries out the reaction UDP-N-acetyl-alpha-D-glucosamine + H2O = aldehydo-N-acetyl-D-mannosamine + UDP + H(+). The catalysed reaction is an N-acyl-D-mannosamine + ATP = an N-acyl-D-mannosamine 6-phosphate + ADP + H(+). It participates in amino-sugar metabolism; N-acetylneuraminate biosynthesis. Its activity is regulated as follows. The UDP-N-acetylglucosamine 2-epimerase activity, in contrast to the N-acetylmannosamine kinase activity, exhibits allosteric regulation by cytidine monophosphate-N-acetylneuraminic acid (CMP-Neu5Ac), the end product of neuraminic acid biosynthesis. Moreover, the activity is contingent upon the oligomeric state of the enzyme. The monomeric form is inactive, while the dimeric form selectively catalyzes the phosphorylation of N-acetylmannosamine. The hexameric form, on the other hand, demonstrates full proficiency in both enzyme activities. Furthermore, the UDP-N-acetylglucosamine 2-epimerase activity is increased by PKC-mediated phosphorylation. Functionally, bifunctional enzyme that possesses both UDP-N-acetylglucosamine 2-epimerase and N-acetylmannosamine kinase activities, and serves as the initiator of the biosynthetic pathway leading to the production of N-acetylneuraminic acid (NeuAc), a critical precursor in the synthesis of sialic acids. By catalyzing this pivotal and rate-limiting step in sialic acid biosynthesis, this enzyme assumes a pivotal role in governing the regulation of cell surface sialylation, playing a role in embryonic angiogenesis. Sialic acids represent a category of negatively charged sugars that reside on the surface of cells as terminal components of glycoconjugates and mediate important functions in various cellular processes, including cell adhesion, signal transduction, and cellular recognition. This chain is Bifunctional UDP-N-acetylglucosamine 2-epimerase/N-acetylmannosamine kinase, found in Mus musculus (Mouse).